The chain runs to 136 residues: Small ribosomal subunit protein uS9 (136 aa).

It belongs to the universal ribosomal protein uS9 family.

In Borrelia duttonii (strain Ly), this protein is Small ribosomal subunit protein uS9.